Consider the following 356-residue polypeptide: NAC domain-containing protein JA2L (356 aa).

The NAC domain maps to 14–162 (LPPGFRFYPT…DWVLCRIYKK (149 aa)). Residues 111 to 168 (VGIKKALVFYIGKAPKGTKTNWIMHEYRLSEPTTKTGSSRLDDWVLCRIYKKNSGGQK) mediate DNA binding. Residues 163-191 (NSGGQKSSCSDLQNKDISHASSSSSSSQF) are disordered. Polar residues predominate over residues 164–174 (SGGQKSSCSDL).

Expressed in guard cells of the epidermis.

The protein localises to the nucleus. Its function is as follows. Transcription factor that acts downstream of MYC2 in the jasmonate-mediated response to Botrytis cinerea infection. With MYC2 forms a transcription module that regulates wounding-responsive genes. Involved in jasmonate- and coronatine-mediated stomatal reopening in response to Pseudomonas syringae pv tomato DC3000 infection. Regulates the expression of threonine deaminase 2 (TD2) through promoter binding. The sequence is that of NAC domain-containing protein JA2L from Solanum lycopersicum (Tomato).